Consider the following 397-residue polypeptide: 1-deoxy-D-xylulose 5-phosphate reductoisomerase (397 aa).

NADPH contacts are provided by Thr12, Gly13, Ser14, Ile15, Gly38, Lys39, Asn40, and Asn126. Lys127 lines the 1-deoxy-D-xylulose 5-phosphate pocket. Glu128 lines the NADPH pocket. Asp152 contributes to the Mn(2+) binding site. 1-deoxy-D-xylulose 5-phosphate contacts are provided by Ser153, Glu154, Ser188, and His211. Glu154 is a binding site for Mn(2+). Gly217 serves as a coordination point for NADPH. 4 residues coordinate 1-deoxy-D-xylulose 5-phosphate: Ser224, Asn229, Lys230, and Glu233. Glu233 is a Mn(2+) binding site.

This sequence belongs to the DXR family. The cofactor is Mg(2+). Mn(2+) serves as cofactor.

It carries out the reaction 2-C-methyl-D-erythritol 4-phosphate + NADP(+) = 1-deoxy-D-xylulose 5-phosphate + NADPH + H(+). Its pathway is isoprenoid biosynthesis; isopentenyl diphosphate biosynthesis via DXP pathway; isopentenyl diphosphate from 1-deoxy-D-xylulose 5-phosphate: step 1/6. Functionally, catalyzes the NADPH-dependent rearrangement and reduction of 1-deoxy-D-xylulose-5-phosphate (DXP) to 2-C-methyl-D-erythritol 4-phosphate (MEP). This is 1-deoxy-D-xylulose 5-phosphate reductoisomerase from Haemophilus influenzae (strain ATCC 51907 / DSM 11121 / KW20 / Rd).